Consider the following 195-residue polypeptide: Protease (195 aa).

The Peptidase A2 domain maps to 71–149 (ALMLVDTGAE…DKWQILGRDV (79 aa)). Asp76 is a catalytic residue.

In Bos taurus (Bovine), this protein is Protease.